Consider the following 164-residue polypeptide: Reticulon-like protein B22 (164 aa).

The region spanning 1–164 (MGEMGKAMGL…ILEQEAHSDT (164 aa)) is the Reticulon domain. Transmembrane regions (helical) follow at residues 30-50 (SLFS…GLLF) and 117-137 (LISG…SMLC).

The protein localises to the endoplasmic reticulum membrane. This chain is Reticulon-like protein B22 (RTNLB22), found in Arabidopsis thaliana (Mouse-ear cress).